The following is a 54-amino-acid chain: MKLLGLLLLVFTFMALAFADEKDCIARGQKCVGENKPCCKGTTCMYYANRCVGV.

An N-terminal signal peptide occupies residues 1–19 (MKLLGLLLLVFTFMALAFA). Intrachain disulfides connect Cys-24-Cys-39, Cys-31-Cys-44, and Cys-38-Cys-51.

This sequence belongs to the venom Ptu1-like knottin family. As to expression, expressed by the venom gland (posterior main gland) (at protein level).

The protein localises to the secreted. In terms of biological role, binds reversibly and blocks P/Q-type voltage-gated calcium channels (Cav). This chain is U-reduvitoxin-Pr1a, found in Platymeris rhadamanthus (Red spot assassin bug).